The chain runs to 193 residues: Putative zinc finger protein 726P1 (193 aa).

Residues 18 to 40 (YKCKKCGKTFNWSSILTNNKKIH) form a C2H2-type 1; degenerate zinc finger. The segment at 46–68 (YKCEECGKAFKQHSTLTTHKIIC) adopts a C2H2-type 2; atypical zinc-finger fold. The segment at 74–96 (YRCEECGKAFCQPSTLTRYKRMH) adopts a C2H2-type 3; degenerate zinc-finger fold. Residues 102 to 124 (YKCEECGKAFTQFSTLTKHKRIH) form a C2H2-type 4 zinc finger. The segment at 130–152 (YKCEESGKAFIWSSGLTEHRRVH) adopts a C2H2-type 5; degenerate zinc-finger fold. A C2H2-type 6 zinc finger spans residues 158 to 180 (YKCEECGKALIQFSTLTRHKRIH).

The protein is Putative zinc finger protein 726P1 (ZNF726P1) of Homo sapiens (Human).